The sequence spans 266 residues: MPISVPQATELKDLFSLKGKVVIVTGASGPTGIGTEAARGCAEYGADLAITYNSRAEGAEKNAKEMSEKYGVKVKAYKCQVNEYAQCEKLVQDVIKDFGKVDVFIANAGKTADNGILDATVEQWNEVIQTDLTGTFNCARAVGLHFRERKTGSLVITSSMSGHIANFPQEQASYNVAKAGCIHLAKSLANEWRDFARVNSISPGYIDTGLSDFVPQDIQKLWHSMIPMGRDAKATELKGAYVYFASDASSYCTGSDLLIDGGYCVR.

NADP(+) contacts are provided by T31, I33, N107, and R140. Catalysis depends on S159, which acts as the Proton donor. Residues Y174, K178, I206, and T208 each contribute to the NADP(+) site. Residue Y174 is the Proton acceptor of the active site. Residue K178 is the Lowers pKa of active site Tyr of the active site.

This sequence belongs to the short-chain dehydrogenases/reductases (SDR) family. Homotetramer.

It localises to the vacuole. The enzyme catalyses D-mannitol + NADP(+) = D-fructose + NADPH + H(+). The chain is NADP-dependent mannitol dehydrogenase from Alternaria alternata (Alternaria rot fungus).